Consider the following 867-residue polypeptide: Leucine--tRNA ligase (867 aa).

The 'HIGH' region motif lies at P43 to H53. The 'KMSKS' region signature appears at K627–S631. K630 provides a ligand contact to ATP.

The protein belongs to the class-I aminoacyl-tRNA synthetase family.

It is found in the cytoplasm. It catalyses the reaction tRNA(Leu) + L-leucine + ATP = L-leucyl-tRNA(Leu) + AMP + diphosphate. In Phenylobacterium zucineum (strain HLK1), this protein is Leucine--tRNA ligase.